Reading from the N-terminus, the 439-residue chain is Proline--tRNA ligase (439 aa).

Belongs to the class-II aminoacyl-tRNA synthetase family. ProS type 2 subfamily. Homodimer.

It localises to the cytoplasm. It catalyses the reaction tRNA(Pro) + L-proline + ATP = L-prolyl-tRNA(Pro) + AMP + diphosphate. Functionally, catalyzes the attachment of proline to tRNA(Pro) in a two-step reaction: proline is first activated by ATP to form Pro-AMP and then transferred to the acceptor end of tRNA(Pro). The sequence is that of Proline--tRNA ligase from Rhodopseudomonas palustris (strain HaA2).